Here is a 133-residue protein sequence, read N- to C-terminus: Large ribosomal subunit protein bL20 (133 aa).

Belongs to the bacterial ribosomal protein bL20 family.

Its function is as follows. Binds directly to 23S ribosomal RNA and is necessary for the in vitro assembly process of the 50S ribosomal subunit. It is not involved in the protein synthesizing functions of that subunit. This chain is Large ribosomal subunit protein bL20, found in Rubrobacter xylanophilus (strain DSM 9941 / JCM 11954 / NBRC 16129 / PRD-1).